A 418-amino-acid chain; its full sequence is MDKFVITGGVPLKGTIPTNGSKNSALPALAAALLTAEPVTLHRVPRVRDIRTMERLLVDIGTTVDVEGETVRLRTERIVSPEAPYELVKTMRASSLVLGPLVARSGRARVSLPGGCAIGARPINLHIFGLEQLGAKINQTHGYIEAVAPDGLRGAVVHFDRITVTGTEDLMMAAVLAKGETLLRNAAREPEVVDLAELLIKMGAKIEGAGTSTIRIQGVESLGGAVHAIIADRIEAGTFLVAGAITGGDLTVTDCIPEHVGALVSKLQQAGVDVTQPSETTVRVRGTGRLRSVDMTTEEYPGFATDLQAQYMALMTQAEGIAVVIENIFENRFMHAQELARMGANIRIDGRQAIVAGPRELTGAGVIASDLRASASLVLGALVARGETVIDRVYHIDRGYEKIEAKLAGVGAKIRRVE.

Position 22–23 (22–23 (KN)) interacts with phosphoenolpyruvate. Arg92 lines the UDP-N-acetyl-alpha-D-glucosamine pocket. Catalysis depends on Cys116, which acts as the Proton donor. Cys116 carries the 2-(S-cysteinyl)pyruvic acid O-phosphothioketal modification. Residues Asp306 and Ile328 each contribute to the UDP-N-acetyl-alpha-D-glucosamine site.

This sequence belongs to the EPSP synthase family. MurA subfamily.

It is found in the cytoplasm. It carries out the reaction phosphoenolpyruvate + UDP-N-acetyl-alpha-D-glucosamine = UDP-N-acetyl-3-O-(1-carboxyvinyl)-alpha-D-glucosamine + phosphate. It participates in cell wall biogenesis; peptidoglycan biosynthesis. Cell wall formation. Adds enolpyruvyl to UDP-N-acetylglucosamine. The polypeptide is UDP-N-acetylglucosamine 1-carboxyvinyltransferase (Solibacter usitatus (strain Ellin6076)).